Consider the following 520-residue polypeptide: GMP synthase [glutamine-hydrolyzing] (520 aa).

The region spanning Lys12–Asp205 is the Glutamine amidotransferase type-1 domain. The Nucleophile role is filled by Cys89. Catalysis depends on residues His179 and Glu181. In terms of domain architecture, GMPS ATP-PPase spans Trp206–Arg395. An ATP-binding site is contributed by Ser233 to Ser239.

In terms of assembly, homodimer.

It catalyses the reaction XMP + L-glutamine + ATP + H2O = GMP + L-glutamate + AMP + diphosphate + 2 H(+). It participates in purine metabolism; GMP biosynthesis; GMP from XMP (L-Gln route): step 1/1. Functionally, catalyzes the synthesis of GMP from XMP. The sequence is that of GMP synthase [glutamine-hydrolyzing] from Streptococcus equi subsp. equi (strain 4047).